A 72-amino-acid chain; its full sequence is Translation initiation factor IF-1 (72 aa).

One can recognise an S1-like domain in the interval 1-72 (MAKEDNFELE…SKGRITYRAR (72 aa)).

It belongs to the IF-1 family. As to quaternary structure, component of the 30S ribosomal translation pre-initiation complex which assembles on the 30S ribosome in the order IF-2 and IF-3, IF-1 and N-formylmethionyl-tRNA(fMet); mRNA recruitment can occur at any time during PIC assembly.

Its subcellular location is the cytoplasm. Functionally, one of the essential components for the initiation of protein synthesis. Stabilizes the binding of IF-2 and IF-3 on the 30S subunit to which N-formylmethionyl-tRNA(fMet) subsequently binds. Helps modulate mRNA selection, yielding the 30S pre-initiation complex (PIC). Upon addition of the 50S ribosomal subunit IF-1, IF-2 and IF-3 are released leaving the mature 70S translation initiation complex. The polypeptide is Translation initiation factor IF-1 (Saccharophagus degradans (strain 2-40 / ATCC 43961 / DSM 17024)).